The sequence spans 354 residues: Fructose-bisphosphate aldolase (354 aa).

Residue serine 50 participates in D-glyceraldehyde 3-phosphate binding. The active-site Proton donor is aspartate 83. Residues histidine 84, aspartate 105, glutamate 142, and histidine 198 each contribute to the Zn(2+) site. A dihydroxyacetone phosphate-binding site is contributed by glycine 199. Histidine 232 is a Zn(2+) binding site. Residues 233–235 (GSS) and 275–278 (NIDT) contribute to the dihydroxyacetone phosphate site.

The protein belongs to the class II fructose-bisphosphate aldolase family. It depends on Zn(2+) as a cofactor.

It catalyses the reaction beta-D-fructose 1,6-bisphosphate = D-glyceraldehyde 3-phosphate + dihydroxyacetone phosphate. Its pathway is carbohydrate degradation; glycolysis; D-glyceraldehyde 3-phosphate and glycerone phosphate from D-glucose: step 4/4. Catalyzes the aldol condensation of dihydroxyacetone phosphate (DHAP or glycerone-phosphate) with glyceraldehyde 3-phosphate (G3P) to form fructose 1,6-bisphosphate (FBP) in gluconeogenesis and the reverse reaction in glycolysis. The sequence is that of Fructose-bisphosphate aldolase (fba) from Pseudomonas aeruginosa (strain ATCC 15692 / DSM 22644 / CIP 104116 / JCM 14847 / LMG 12228 / 1C / PRS 101 / PAO1).